The following is a 205-amino-acid chain: Outer-membrane lipoprotein LolB (205 aa).

Residues 1 to 17 (MFLRHCITFTMIALLAG) form the signal peptide. Residue C18 is the site of N-palmitoyl cysteine attachment. C18 carries S-diacylglycerol cysteine lipidation.

It belongs to the LolB family. As to quaternary structure, monomer.

The protein localises to the cell outer membrane. Its function is as follows. Plays a critical role in the incorporation of lipoproteins in the outer membrane after they are released by the LolA protein. This Pseudomonas putida (strain ATCC 700007 / DSM 6899 / JCM 31910 / BCRC 17059 / LMG 24140 / F1) protein is Outer-membrane lipoprotein LolB.